The primary structure comprises 221 residues: MTLNDKYPFTDEDQAIINSYKAVVDGVSALIGEHCEIVLHSLENIEHSAICIANGHNTNRQVGSPITDLALRSLRNMQSESVSKPYFTRAKGSVLMKSVTIAIRNKTQRIIGLLCININLDVPVSQFLQCFMLTEHTNETSSVNFANSVEDLVAQTIEKTIEEVNADRAVANNTKNRQIVLSLYEKGIFDIKDAINLVAERLDISRHTVYLYIRQIKQEQE.

It to E.coli YheO.

This is an uncharacterized protein from Haemophilus influenzae (strain ATCC 51907 / DSM 11121 / KW20 / Rd).